Consider the following 279-residue polypeptide: Type II iodothyronine deiodinase (279 aa).

At 1 to 7 the chain is on the lumenal side; sequence MGLLSAD. Residues 8 to 28 traverse the membrane as a helical; Signal-anchor for type III membrane protein segment; sequence LLITLQILPVFFSNCLFLALY. Topologically, residues 29-279 are cytoplasmic; it reads DSVILLKHMV…TEDLSTDVSL (251 aa). Residue Sec132 is part of the active site. 2 non-standard amino acids (selenocysteine) are found at residues Sec132 and Sec265.

This sequence belongs to the iodothyronine deiodinase family. As to quaternary structure, predominantly monomer. Can form homodimers but homodimerization is not essential for enzyme activity. As to expression, highly expressed in liver and in various parts of the brain including telencephalon, hippocampus, cerebellum, and brain stem, and weakly expressed in thyroid, lung, and small intestine. Not detected in skeletal muscle, heart atria or ventricle, gizzard or kidney.

Its subcellular location is the endoplasmic reticulum membrane. It carries out the reaction 3,3',5-triiodo-L-thyronine + iodide + A + H(+) = L-thyroxine + AH2. It catalyses the reaction 3,3'-diiodo-L-thyronine + iodide + A + H(+) = 3,3',5'-triiodo-L-thyronine + AH2. The catalysed reaction is 3'-iodo-L-thyronine + iodide + A + H(+) = 3',5'-diiodo-L-thyronine + AH2. The enzyme catalyses 3,3'-diiodothyronamine + iodide + A + H(+) = 3,3',5'-triiodothyronamine + AH2. It carries out the reaction 3'-iodothyronamine + iodide + A + H(+) = 3',5'-diiodothyronamine + AH2. With respect to regulation, not inhibited by N(6)-propylthiouracil. Its function is as follows. Plays a crucial role in the metabolism of thyroid hormones (TH) and has specific roles in TH activation and inactivation by deiodination. Catalyzes the deiodination of L-thyroxine (T4) to 3,5,3'-triiodothyronine (T3) and 3,3',5'-triiodothyronine (rT3) to 3,3'-diiodothyronine (3,3'-T2) via outer-ring deiodination (ORD). Catalyzes the deiodination of 3',5'-diiodothyronine (3',5'-T2) to 3'-monoiodothyronine (3'-T1) via ORD. Catalyzes the phenolic ring deiodinations of 3,3',5'-triiodothyronamine and 3',5'- diiodothyronamine. The sequence is that of Type II iodothyronine deiodinase (DIO2) from Gallus gallus (Chicken).